An 892-amino-acid chain; its full sequence is Alanine--tRNA ligase (892 aa).

Zn(2+) is bound by residues His-574, His-578, Cys-676, and His-680.

Belongs to the class-II aminoacyl-tRNA synthetase family. Requires Zn(2+) as cofactor.

The protein localises to the cytoplasm. The enzyme catalyses tRNA(Ala) + L-alanine + ATP = L-alanyl-tRNA(Ala) + AMP + diphosphate. Catalyzes the attachment of alanine to tRNA(Ala) in a two-step reaction: alanine is first activated by ATP to form Ala-AMP and then transferred to the acceptor end of tRNA(Ala). Also edits incorrectly charged Ser-tRNA(Ala) and Gly-tRNA(Ala) via its editing domain. The sequence is that of Alanine--tRNA ligase from Prochlorococcus marinus (strain MIT 9303).